The sequence spans 158 residues: 6,7-dimethyl-8-ribityllumazine synthase (158 aa).

Residues Phe23, Ser61–Glu63, and Ala85–Ile87 each bind 5-amino-6-(D-ribitylamino)uracil. Asp90–Thr91 provides a ligand contact to (2S)-2-hydroxy-3-oxobutyl phosphate. The active-site Proton donor is His93. Phe118 serves as a coordination point for 5-amino-6-(D-ribitylamino)uracil. Residue Arg132 participates in (2S)-2-hydroxy-3-oxobutyl phosphate binding.

Belongs to the DMRL synthase family.

It catalyses the reaction (2S)-2-hydroxy-3-oxobutyl phosphate + 5-amino-6-(D-ribitylamino)uracil = 6,7-dimethyl-8-(1-D-ribityl)lumazine + phosphate + 2 H2O + H(+). It participates in cofactor biosynthesis; riboflavin biosynthesis; riboflavin from 2-hydroxy-3-oxobutyl phosphate and 5-amino-6-(D-ribitylamino)uracil: step 1/2. Catalyzes the formation of 6,7-dimethyl-8-ribityllumazine by condensation of 5-amino-6-(D-ribitylamino)uracil with 3,4-dihydroxy-2-butanone 4-phosphate. This is the penultimate step in the biosynthesis of riboflavin. The sequence is that of 6,7-dimethyl-8-ribityllumazine synthase from Prochlorococcus marinus (strain NATL1A).